Reading from the N-terminus, the 92-residue chain is Small ribosomal subunit protein uS19 (92 aa).

Belongs to the universal ribosomal protein uS19 family.

Functionally, protein S19 forms a complex with S13 that binds strongly to the 16S ribosomal RNA. The sequence is that of Small ribosomal subunit protein uS19 from Streptococcus agalactiae serotype Ia (strain ATCC 27591 / A909 / CDC SS700).